A 771-amino-acid polypeptide reads, in one-letter code: Leucine-rich repeat and fibronectin type III domain-containing protein 1 (771 aa).

An N-terminal signal peptide occupies residues 1–31 (MAPGPFSSALLSPPPAALPFLLLLWAGASRG). An LRRNT domain is found at 32-65 (QPCPGRCICQNVAPTLTMLCAKTGLLFVPPAIDR). Over 32–536 (QPCPGRCICQ…LRAHFLGGTM (505 aa)) the chain is Extracellular. LRR repeat units follow at residues 66–87 (RVVE…DFAN), 90–111 (SLVH…AFAD), 114–135 (ALRA…QLRG), 138–159 (NLRH…AFDA), 163–184 (TVED…AVGQ), 187–208 (NLNT…TFVQ), and 211–232 (KLVR…GLFL). A glycan (N-linked (GlcNAc...) asparagine) is linked at Asn-87. One can recognise an LRRCT domain in the interval 252–298 (NPLHCNCELLWLRRLTREDDLETCATPEHLTDRYFWSIPEEEFLCEP). The Ig-like domain occupies 299–386 (PLITRQAGGR…GEATAPVEVC (88 aa)). A disulfide bridge connects residues Cys-321 and Cys-370. An N-linked (GlcNAc...) asparagine glycan is attached at Asn-343. The interval 397 to 422 (PAAPPPLTEPGSSDIATPGRPGANDS) is disordered. The Fibronectin type-III domain maps to 424–520 (AERRLVAAEL…GCVQFTTAGD (97 aa)). The helical transmembrane segment at 537–557 (IIAIGGVIVASVLVFIVLLMI) threads the bilayer. Topologically, residues 558–771 (RYKVYGDGDS…STEWMLESTV (214 aa)) are cytoplasmic. Phosphoserine occurs at positions 613 and 718. Positions 654 to 743 (PSEETSGEES…HLDGAGGGAA (90 aa)) are disordered. A compositionally biased stretch (basic residues) spans 719-732 (YPRRARRTKRHRST). The short motif at 768 to 771 (ESTV) is the PDZ-binding element.

It belongs to the LRFN family. In terms of assembly, can form heteromeric complexes with LRFN2, LRFN3, LRFN4 and LRFN5. Forms homomeric complexes, but not across cell junctions. Interacts with DLG1, DLG2, DLG3 and DLG4. Interacts with 2 AMPA receptor subunits GRIA1 and GRIA2 and NMDA receptor subunit GRIN1. Post-translationally, glycosylated.

It is found in the membrane. Its subcellular location is the synapse. The protein resides in the postsynaptic density membrane. Promotes neurite outgrowth in hippocampal neurons. Involved in the regulation and maintenance of excitatory synapses. Induces the clustering of excitatory postsynaptic proteins, including DLG4, DLGAP1, GRIA1 and GRIN1. The chain is Leucine-rich repeat and fibronectin type III domain-containing protein 1 (LRFN1) from Homo sapiens (Human).